The following is a 250-amino-acid chain: Sperm-egg fusion protein Juno (250 aa).

The first 19 residues, 1–19 (MACWWPLLLELWTVMPTWA), serve as a signal peptide directing secretion. 8 disulfides stabilise this stretch: C27/C55, C47/C95, C56/C99, C79/C172, C86/C143, C132/C206, C136/C186, and C149/C166. The important for interaction with IZUMO1 stretch occupies residues 62 to 81 (WEAHLDVSPLYNFSLFHCGL). N73 carries N-linked (GlcNAc...) asparagine glycosylation. The GPI-anchor amidated serine moiety is linked to residue S228. Residues 229–250 (SAPSWELSYTIMVCSLFLPFLS) constitute a propeptide that is removed on maturation.

This sequence belongs to the folate receptor family. In terms of assembly, monomer. Interacts with IZUMO1; the interaction is direct. IZUMO1 and IZUMO1R/JUNO form a complex with 1:1 stoichiometry. Interacts with FCRL3/MAIA; FCRL3/MAIA replaces IZUMO1R/JUNO as IZUMO1 receptor after sperm-egg adhesion, thereby permitting species-specific gamete fusion. Interacts with WDR54. In terms of processing, the protein is rapidly cleaved following fertilization, being only weakly detectable in zona-intact fertilized eggs at telophase II and undetectable at the pronuclear stage. Sheding is probably required to block to polyspermy and ensuring egg fusion with a single sperm. Expressed in unfertilized oocytes (at protein level).

It localises to the cell membrane. Its subcellular location is the cell projection. It is found in the microvillus membrane. In terms of biological role, receptor for IZUMO1 present at the cell surface of oocytes (oolemma), which is essential for species-specific gamete recognition and fertilization. The IZUMO1:IZUMO1R/JUNO interaction is a necessary adhesion event between sperm and egg that is required for fertilization but is not sufficient for cell fusion. The ligand-receptor interaction probably does not act as a membrane 'fusogen'. Does not bind folate. The chain is Sperm-egg fusion protein Juno from Homo sapiens (Human).